The sequence spans 599 residues: Elongation factor 4 (599 aa).

The tr-type G domain occupies 3–185 (KNIRNFSIIA…AIVERIPPPS (183 aa)). GTP-binding positions include 15-20 (DHGKST) and 132-135 (NKID).

This sequence belongs to the TRAFAC class translation factor GTPase superfamily. Classic translation factor GTPase family. LepA subfamily.

Its subcellular location is the cell membrane. The enzyme catalyses GTP + H2O = GDP + phosphate + H(+). In terms of biological role, required for accurate and efficient protein synthesis under certain stress conditions. May act as a fidelity factor of the translation reaction, by catalyzing a one-codon backward translocation of tRNAs on improperly translocated ribosomes. Back-translocation proceeds from a post-translocation (POST) complex to a pre-translocation (PRE) complex, thus giving elongation factor G a second chance to translocate the tRNAs correctly. Binds to ribosomes in a GTP-dependent manner. This Syntrophomonas wolfei subsp. wolfei (strain DSM 2245B / Goettingen) protein is Elongation factor 4.